The sequence spans 185 residues: MKLLKESLKNAPVIMKGNYPYFIHPLTDGIPEIDPAVLKDAVNEIIKVIDIDNFDKIVAVEAMGLPIGVALSMELTKPMTVIRKRPYGLSGEVMVEQQTGYSKGKLYINSISSQDTLLLVDDVLSTGGTITAVVDGIKKIGAKISDIVVVVNKNRNIKEVEQKIGFKIKTIVNIEIVDGKVKVLD.

It belongs to the purine/pyrimidine phosphoribosyltransferase family. Archaeal HPRT subfamily. Homodimer.

Its subcellular location is the cytoplasm. The catalysed reaction is IMP + diphosphate = hypoxanthine + 5-phospho-alpha-D-ribose 1-diphosphate. It catalyses the reaction GMP + diphosphate = guanine + 5-phospho-alpha-D-ribose 1-diphosphate. Its pathway is purine metabolism; IMP biosynthesis via salvage pathway; IMP from hypoxanthine: step 1/1. Its function is as follows. Catalyzes a salvage reaction resulting in the formation of IMP that is energically less costly than de novo synthesis. The protein is Hypoxanthine/guanine phosphoribosyltransferase of Aciduliprofundum boonei (strain DSM 19572 / T469).